Reading from the N-terminus, the 280-residue chain is DNA repair protein RecO (280 aa).

The segment at 261-280 (DMAHGNHTGQEDLPATASGA) is disordered.

Belongs to the RecO family.

In terms of biological role, involved in DNA repair and RecF pathway recombination. This chain is DNA repair protein RecO, found in Mycolicibacterium smegmatis (strain ATCC 700084 / mc(2)155) (Mycobacterium smegmatis).